The sequence spans 126 residues: RutC family protein y4sK (126 aa).

The protein belongs to the RutC family.

This Sinorhizobium fredii (strain NBRC 101917 / NGR234) protein is RutC family protein y4sK.